The following is a 34-amino-acid chain: Photosystem II reaction center protein M (34 aa).

The helical transmembrane segment at 7–27 (GFLATLLFVAVPMLFLIGLYI) threads the bilayer.

It belongs to the PsbM family. As to quaternary structure, PSII is composed of 1 copy each of membrane proteins PsbA, PsbB, PsbC, PsbD, PsbE, PsbF, PsbH, PsbI, PsbJ, PsbK, PsbL, PsbM, PsbT, PsbX, PsbY, Psb30/Ycf12, peripheral proteins PsbO, CyanoQ (PsbQ), PsbU, PsbV and a large number of cofactors. It forms dimeric complexes.

It is found in the cellular thylakoid membrane. In terms of biological role, one of the components of the core complex of photosystem II (PSII). PSII is a light-driven water:plastoquinone oxidoreductase that uses light energy to abstract electrons from H(2)O, generating O(2) and a proton gradient subsequently used for ATP formation. It consists of a core antenna complex that captures photons, and an electron transfer chain that converts photonic excitation into a charge separation. This subunit is found at the monomer-monomer interface. The chain is Photosystem II reaction center protein M from Prochlorococcus marinus (strain MIT 9303).